Consider the following 484-residue polypeptide: UDP-N-acetylmuramoyl-L-alanyl-D-glutamate--L-lysine ligase (484 aa).

Ser43 is a binding site for UDP-N-acetyl-alpha-D-muramoyl-L-alanyl-D-glutamate. Gly119–Thr125 contributes to the ATP binding site. UDP-N-acetyl-alpha-D-muramoyl-L-alanyl-D-glutamate is bound by residues Thr161 to Thr162, Ser188, and Arg196. Residue Lys230 is modified to N6-carboxylysine. Positions Asp405–Asn408 match the L-lysine recognition motif motif.

Belongs to the MurCDEF family. MurE subfamily. In terms of processing, carboxylation is probably crucial for Mg(2+) binding and, consequently, for the gamma-phosphate positioning of ATP.

The protein resides in the cytoplasm. It catalyses the reaction UDP-N-acetyl-alpha-D-muramoyl-L-alanyl-D-glutamate + L-lysine + ATP = UDP-N-acetyl-alpha-D-muramoyl-L-alanyl-gamma-D-glutamyl-L-lysine + ADP + phosphate + H(+). It functions in the pathway cell wall biogenesis; peptidoglycan biosynthesis. Catalyzes the addition of L-lysine to the nucleotide precursor UDP-N-acetylmuramoyl-L-alanyl-D-glutamate (UMAG) in the biosynthesis of bacterial cell-wall peptidoglycan. In Streptococcus agalactiae serotype Ia (strain ATCC 27591 / A909 / CDC SS700), this protein is UDP-N-acetylmuramoyl-L-alanyl-D-glutamate--L-lysine ligase.